The following is a 145-amino-acid chain: Deoxyuridine 5'-triphosphate nucleotidohydrolase (145 aa).

Substrate is bound by residues 63-65 (RSG), Gln76, and 80-82 (TVD).

Belongs to the dUTPase family. Mg(2+) is required as a cofactor.

The catalysed reaction is dUTP + H2O = dUMP + diphosphate + H(+). The protein operates within pyrimidine metabolism; dUMP biosynthesis; dUMP from dCTP (dUTP route): step 2/2. This enzyme is involved in nucleotide metabolism: it produces dUMP, the immediate precursor of thymidine nucleotides and it decreases the intracellular concentration of dUTP so that uracil cannot be incorporated into DNA. This chain is Deoxyuridine 5'-triphosphate nucleotidohydrolase, found in Chlamydia muridarum (strain MoPn / Nigg).